A 213-amino-acid chain; its full sequence is Ribonuclease T (213 aa).

An Exonuclease domain is found at 28-202 (VVVDVETGGF…YDTEQTARLF (175 aa)). Mg(2+) is bound by residues D31, E33, H189, and D194. H189 serves as the catalytic Proton donor/acceptor.

Belongs to the RNase T family. As to quaternary structure, homodimer. Mg(2+) is required as a cofactor.

In terms of biological role, trims short 3' overhangs of a variety of RNA species, leaving a one or two nucleotide 3' overhang. Responsible for the end-turnover of tRNA: specifically removes the terminal AMP residue from uncharged tRNA (tRNA-C-C-A). Also appears to be involved in tRNA biosynthesis. This chain is Ribonuclease T, found in Xanthomonas euvesicatoria pv. vesicatoria (strain 85-10) (Xanthomonas campestris pv. vesicatoria).